We begin with the raw amino-acid sequence, 244 residues long: Small ribosomal subunit protein uS2 (244 aa).

The protein belongs to the universal ribosomal protein uS2 family.

This chain is Small ribosomal subunit protein uS2, found in Buchnera aphidicola subsp. Schizaphis graminum (strain Sg).